Here is a 643-residue protein sequence, read N- to C-terminus: MACMHQAQLYNDLEELLTGPSVPIVAGAAGAAALTAYINAKYHIAHDLKTLGGGLTQSSEAIDFINRRVAQKRVLTHHIFQEQVQKQSNHPFLIFEGKTWSYKEFSEAYTRVANWLIDELDVQVGEMVAIDGGNSAEHLMLWLALDAIGAATSFLNWNLTGAGLIHCIKLCECRFVIADIDIKANIEPCRGELEETGINIHYYDPSFISSLPNNTPIPDSRTENIELDSVRGLIYTSGTTGLPKGVFISTGRELRTDWSISKYLNLKPTDRMYTCMPLYHAAAHSLCTASVIHGGGTVVLSRKFSHKKFWPEVVASEANIIQYVGELGRYLLNGPKSPYDRAHKVQMAWGNGMRPDVWEAFRERFNIPIIHELYAATDGLGSMTNRNAGPFTANCIALRGLIWHWKFRNQEVLVKMDLDTDEIMRDRNGFAIRCAVNEPGQMLFRLTPETLAGAPSYYNNETATQSRRITDVFQKGDLWFKSGDMLRQDAEGRVYFVDRLGDTFRWKSENVSTNEVADVMGTFPQIAETNVYGVLVPGNDGRVRSLNCHGRRRDRVDIRFAALAKHARDRLPGYAVPLFLRVTPALEYTGTLKIQKGRLKQEGIDPDKISGEDKLYWLPPGSDIYLPFGKMEWQGIVDKRIRL.

The Cytoplasmic portion of the chain corresponds to 1–15 (MACMHQAQLYNDLEE). Residues 16–36 (LLTGPSVPIVAGAAGAAALTA) form a helical membrane-spanning segment. At 37 to 138 (YINAKYHIAH…AIDGGNSAEH (102 aa)) the chain is on the extracellular side. Residues 139–159 (LMLWLALDAIGAATSFLNWNL) traverse the membrane as a helical segment. Residues 160–249 (TGAGLIHCIK…TGLPKGVFIS (90 aa)) are Cytoplasmic-facing. 235-246 (YTSGTTGLPKGV) is an ATP binding site. The stretch at 250 to 318 (TGRELRTDWS…FWPEVVASEA (69 aa)) is an intramembrane region. Topologically, residues 319–643 (NIIQYVGELG…QGIVDKRIRL (325 aa)) are cytoplasmic. The short motif at 477-525 (DLWFKSGDMLRQDAEGRVYFVDRLGDTFRWKSENVSTNEVADVMGTFPQ) is the FACS element.

This sequence belongs to the ATP-dependent AMP-binding enzyme family.

Its subcellular location is the lipid droplet. The protein resides in the cell membrane. It is found in the peroxisome membrane. It localises to the peroxisome. The enzyme catalyses a very long-chain fatty acid + ATP + CoA = a very long-chain fatty acyl-CoA + AMP + diphosphate. Acyl-CoA synthetase required for both the import of long chain fatty acids (LCFAs) (C14-C18) and the activation very long chain fatty acids (VLCFAs) (C20-C26) by esterification of the fatty acids into metabolically active CoA-thioesters for subsequent degradation or incorporation into phospholipids. The transport and fatty acyl-CoA synthetase activities are genetically separable and are thus independent activities. Esterifies VLCFAs in the peroxisome matrix. The VLCFAs are actively transported into peroxisomes by a PXA1-PXA2 heterodimeric transporter in the peroxisomal membrane. The chain is Very long-chain fatty acid transport protein (FAT1) from Cochliobolus heterostrophus (Southern corn leaf blight fungus).